The primary structure comprises 55 residues: Protein CADMIUM TOLERANCE 1 (55 aa).

A helical membrane pass occupies residues 24–40; sequence GCLYACIFTALCCFCCY.

Belongs to the CYSTM1 family. In terms of tissue distribution, expressed in roots and shoots.

It localises to the cell membrane. Its subcellular location is the secreted. The protein localises to the cell wall. Functionally, confers resistance to heavy metal ions (e.g. cadmium (CdCl(2)) and copper (CuCl(2))) by chelating them at the plasma membrane of root cells, thus stopping their entry and reducing their accumulation. Binds to aluminium (Al). The protein is Protein CADMIUM TOLERANCE 1 of Oryza sativa subsp. japonica (Rice).